Here is a 190-residue protein sequence, read N- to C-terminus: Somatotropin (190 aa).

His-19 contacts Zn(2+). Residues Cys-52 and Cys-163 are joined by a disulfide bond. Residue Glu-172 coordinates Zn(2+). A disulfide bridge links Cys-180 with Cys-188.

The protein belongs to the somatotropin/prolactin family.

It localises to the secreted. In terms of biological role, growth hormone plays an important role in growth control and involved in the regulation of several anabolic processes. In Crocodylus novaeguineae (Crocodile), this protein is Somatotropin (GH).